The chain runs to 270 residues: Phosphonates import ATP-binding protein PhnC 1 (270 aa).

The ABC transporter domain occupies Leu2 to Ala245. Gly34 to Ser41 lines the ATP pocket.

It belongs to the ABC transporter superfamily. Phosphonates importer (TC 3.A.1.9.1) family. In terms of assembly, the complex is composed of two ATP-binding proteins (PhnC), two transmembrane proteins (PhnE) and a solute-binding protein (PhnD).

The protein resides in the cell inner membrane. It catalyses the reaction phosphonate(out) + ATP + H2O = phosphonate(in) + ADP + phosphate + H(+). Functionally, part of the ABC transporter complex PhnCDE involved in phosphonates import. Responsible for energy coupling to the transport system. The polypeptide is Phosphonates import ATP-binding protein PhnC 1 (Rhodopseudomonas palustris (strain ATCC BAA-98 / CGA009)).